Here is a 424-residue protein sequence, read N- to C-terminus: Ribulose bisphosphate carboxylase (424 aa).

Lysine 159 (proton acceptor) is an active-site residue. Substrate is bound at residue lysine 161. Mg(2+) contacts are provided by lysine 185, aspartate 187, and glutamate 188. Lysine 185 carries the post-translational modification N6-carboxylysine. Histidine 277 (proton acceptor) is an active-site residue. Residues arginine 278, histidine 310, 347–349, and 369–372 each bind substrate; these read SGG and QAGG.

This sequence belongs to the RuBisCO large chain family. Type III subfamily. Homodimer or homodecamer. In contrast to form I RuBisCO, the form III RuBisCO is composed solely of large subunits. Mg(2+) is required as a cofactor.

The catalysed reaction is 2 (2R)-3-phosphoglycerate + 2 H(+) = D-ribulose 1,5-bisphosphate + CO2 + H2O. It carries out the reaction D-ribulose 1,5-bisphosphate + O2 = 2-phosphoglycolate + (2R)-3-phosphoglycerate + 2 H(+). Its function is as follows. Catalyzes the addition of molecular CO(2) and H(2)O to ribulose 1,5-bisphosphate (RuBP), generating two molecules of 3-phosphoglycerate (3-PGA). Functions in an archaeal AMP degradation pathway, together with AMP phosphorylase and R15P isomerase. The chain is Ribulose bisphosphate carboxylase from Pyrococcus abyssi (strain GE5 / Orsay).